The primary structure comprises 347 residues: Heat-inducible transcription repressor HrcA (347 aa).

The protein belongs to the HrcA family.

Its function is as follows. Negative regulator of class I heat shock genes (grpE-dnaK-dnaJ and groELS operons). Prevents heat-shock induction of these operons. This Lactococcus lactis subsp. cremoris (strain MG1363) protein is Heat-inducible transcription repressor HrcA.